Reading from the N-terminus, the 296-residue chain is Malate--CoA ligase subunit alpha (296 aa).

CoA is bound by residues 17–20, Lys-43, and 96–98; these read TGDK and ITD. His-251 serves as the catalytic Tele-phosphohistidine intermediate.

It belongs to the succinate/malate CoA ligase alpha subunit family. As to quaternary structure, heterotetramer of two alpha and two beta subunits.

The enzyme catalyses (S)-malate + ATP + CoA = (S)-malyl-CoA + ADP + phosphate. It functions in the pathway one-carbon metabolism; formaldehyde assimilation via serine pathway. The chain is Malate--CoA ligase subunit alpha (mtkB) from Methylorubrum extorquens (strain ATCC 14718 / DSM 1338 / JCM 2805 / NCIMB 9133 / AM1) (Methylobacterium extorquens).